A 192-amino-acid chain; its full sequence is Fe/S biogenesis protein NfuA (192 aa).

Residues cysteine 149 and cysteine 152 each contribute to the [4Fe-4S] cluster site.

Belongs to the NfuA family. As to quaternary structure, homodimer. The cofactor is [4Fe-4S] cluster.

Its function is as follows. Involved in iron-sulfur cluster biogenesis. Binds a 4Fe-4S cluster, can transfer this cluster to apoproteins, and thereby intervenes in the maturation of Fe/S proteins. Could also act as a scaffold/chaperone for damaged Fe/S proteins. This Shewanella halifaxensis (strain HAW-EB4) protein is Fe/S biogenesis protein NfuA.